The following is a 110-amino-acid chain: MFGKGGIGNLMKQAQQMQEKMQQMQEEVAKLEVTGESGAGLVKVTINGAHNCRRVEIDPSLLVEEDKEMLEDLIAAAFNDAARRIDETQKEKMASVSSGMQLPPGFKMPF.

The protein belongs to the YbaB/EbfC family. Homodimer.

The protein localises to the cytoplasm. It is found in the nucleoid. Functionally, binds to DNA and alters its conformation. May be involved in regulation of gene expression, nucleoid organization and DNA protection. This Yersinia enterocolitica serotype O:8 / biotype 1B (strain NCTC 13174 / 8081) protein is Nucleoid-associated protein YE3092.